Reading from the N-terminus, the 86-residue chain is MASSLSLGSKILILLIRGYQLGISPLLGPRCRFNPTCSHYGIEALRRFGMIKGSWLTVKRILKCHPLHEGGDDPVPPRKNDDNREN.

The disordered stretch occupies residues 66 to 86; the sequence is PLHEGGDDPVPPRKNDDNREN.

This sequence belongs to the UPF0161 family.

The protein localises to the cell inner membrane. In terms of biological role, could be involved in insertion of integral membrane proteins into the membrane. The sequence is that of Putative membrane protein insertion efficiency factor from Proteus mirabilis (strain HI4320).